A 184-amino-acid polypeptide reads, in one-letter code: Photosystem I assembly protein Ycf4 (184 aa).

Transmembrane regions (helical) follow at residues 21–43 (NFFW…SSSY) and 58–80 (VFIP…GFYL).

Belongs to the Ycf4 family.

The protein localises to the plastid. It localises to the chloroplast thylakoid membrane. Its function is as follows. Seems to be required for the assembly of the photosystem I complex. The protein is Photosystem I assembly protein Ycf4 of Psilotum nudum (Whisk fern).